Consider the following 281-residue polypeptide: Alcohol dehydrogenase-related 31 kDa protein (281 aa).

11–34 is a binding site for NAD(+); it reads YVADCGGIALETSKVLMTKNIAKL. Ser-139 serves as a coordination point for substrate. The active-site Proton acceptor is Tyr-152.

This sequence belongs to the short-chain dehydrogenases/reductases (SDR) family.

The protein is Alcohol dehydrogenase-related 31 kDa protein (Adhr) of Drosophila ambigua (Fruit fly).